Consider the following 187-residue polypeptide: NADH-quinone oxidoreductase subunit B (187 aa).

Residues Met-1–His-10 show a composition bias toward basic and acidic residues. Residues Met-1–Gln-22 are disordered. [4Fe-4S] cluster is bound by residues Cys-66, Cys-67, Cys-131, and Cys-161.

Belongs to the complex I 20 kDa subunit family. In terms of assembly, NDH-1 is composed of 14 different subunits. Subunits NuoB, C, D, E, F, and G constitute the peripheral sector of the complex. Requires [4Fe-4S] cluster as cofactor.

Its subcellular location is the cell inner membrane. It catalyses the reaction a quinone + NADH + 5 H(+)(in) = a quinol + NAD(+) + 4 H(+)(out). Its function is as follows. NDH-1 shuttles electrons from NADH, via FMN and iron-sulfur (Fe-S) centers, to quinones in the respiratory chain. Couples the redox reaction to proton translocation (for every two electrons transferred, four hydrogen ions are translocated across the cytoplasmic membrane), and thus conserves the redox energy in a proton gradient. In Erythrobacter litoralis (strain HTCC2594), this protein is NADH-quinone oxidoreductase subunit B.